Here is an 895-residue protein sequence, read N- to C-terminus: Plasma membrane ATPase 1 (895 aa).

Residues 1–53 (MSATEPTNEKVDKIVSDDEDEDIDQLVADLQSNPGAGDEEEEEENDSSFKAVP) are disordered. Topologically, residues 1 to 92 (MSATEPTNEK…AEEQENLVLK (92 aa)) are cytoplasmic. Residues 7–16 (TNEKVDKIVS) show a composition bias toward basic and acidic residues. Positions 37 to 46 (GDEEEEEEND) are enriched in acidic residues. A helical membrane pass occupies residues 93–113 (FVMFFVGPIQFVMEAAAVLAA). Residues 114-117 (GLED) lie on the Extracellular side of the membrane. A helical transmembrane segment spans residues 118–137 (WVDFGVICALLLLNAFVGFI). Residues 138–268 (QEYQAGSIVD…GTGHFTEVLN (131 aa)) are Cytoplasmic-facing. The chain crosses the membrane as a helical span at residues 269 to 290 (GIGTTLLVFVIVTLLVVWVACF). Residues 291 to 301 (YRTVRIVPILR) are Extracellular-facing. The helical transmembrane segment at 302 to 324 (YTLAITIIGVPVGLPAVVTTTMA) threads the bilayer. The Cytoplasmic portion of the chain corresponds to 325 to 696 (VGAAYLAKKQ…IAILNRSLDI (372 aa)). The active-site 4-aspartylphosphate intermediate is Asp-355. The Mg(2+) site is built by Asp-611 and Asp-615. A helical membrane pass occupies residues 697–715 (NLIVFIAIFADVATLAIAY). The Extracellular portion of the chain corresponds to 716 to 731 (DNAPYDPKPVKWNLPR). A helical transmembrane segment spans residues 732 to 751 (LWGMSIVLGIILAIGTWITL). The Cytoplasmic portion of the chain corresponds to 752–801 (TTMLLPKGGIIQNFGGLDGILFLQISLTENWLIFVTRAQGPFWSSIPSWQ). Residues 802 to 822 (LSGAVLIVDIIATCFTLFGWW) form a helical membrane-spanning segment. At 823–834 (SQNWTDIVTVVR) the chain is on the extracellular side. A helical membrane pass occupies residues 835-851 (TWIWSFGVFCVMGGAYY). At 852-895 (LMSTSEAFDNFCNGRKPQQHTDKRSLEDFLVSMQRVSTQHEKST) the chain is on the cytoplasmic side.

Belongs to the cation transport ATPase (P-type) (TC 3.A.3) family. Type IIIA subfamily.

Its subcellular location is the cell membrane. The catalysed reaction is ATP + H2O + H(+)(in) = ADP + phosphate + 2 H(+)(out). The plasma membrane ATPase of plants and fungi is a hydrogen ion pump. The proton gradient it generates drives the active transport of nutrients by H(+)-symport. The resulting external acidification and/or internal alkinization may mediate growth responses. This chain is Plasma membrane ATPase 1 (PMA1), found in Candida albicans (Yeast).